The primary structure comprises 1015 residues: Collagen alpha-2(I) chain (1015 aa).

The segment at 1 to 1015 (SGGFDFSFLP…FGYEGDFYRA (1015 aa)) is disordered. 4-hydroxyproline is present on residues Pro10 and Pro13. Positions 20-30 (KGVGLGPGPMG) are enriched in gly residues. Residue Pro38 is modified to 4-hydroxyproline. Positions 43–69 (QGPAGEPGEPGQTGPAGARGPAGPPGK) are enriched in low complexity. Basic and acidic residues predominate over residues 70-84 (AGEDGHPGKPGRPGE). Position 106 is a 5-hydroxylysine; alternate (Lys106). An O-linked (Gal...) hydroxylysine; alternate glycan is attached at Lys106. Low complexity-rich tracts occupy residues 140–169 (VGAP…SAGP), 194–208 (AGPR…VSGP), and 235–250 (PGPV…RGLV). The segment covering 302–311 (GLRGGPGSRG) has biased composition (gly residues). The span at 324–340 (PAGSRGASGPAGVRGPS) shows a compositional bias: low complexity. 4-hydroxyproline occurs at positions 346 and 349. Residues 441–450 (GVQGGKGEQG) show a composition bias toward gly residues. A compositionally biased stretch (low complexity) spans 497-514 (PGESGAAGPVGPIGSRGP). Over residues 534-545 (GTAGPGSGGLPG) the composition is skewed to gly residues. Low complexity-rich tracts occupy residues 568–612 (VGTT…PRGS) and 619–639 (VGPA…QPGA). Residues 640-649 (KGERGTKGPK) are compositionally biased toward basic and acidic residues. Residues 657–670 (PTGPVGAAGPSGPN) show a composition bias toward low complexity. Over residues 674–686 (GPAGGRGDGGPPG) the composition is skewed to gly residues. Low complexity predominate over residues 687–697 (LTGFPGAAGRT). The span at 734-743 (GETGAGGPPG) shows a compositional bias: gly residues. Composition is skewed to low complexity over residues 751 to 778 (SGEP…LGLP), 786 to 799 (LPGV…PGPL), 846 to 868 (YAGN…VGPA), and 877 to 897 (PGPA…PSGP). Positions 901 to 912 (RGDKGEAGDKGP) are enriched in basic and acidic residues. The span at 987–997 (PAGPPGPPGPP) shows a compositional bias: pro residues.

Belongs to the fibrillar collagen family. In terms of assembly, trimers of one alpha 2(I) and two alpha 1(I) chains. Interacts (via C-terminus) with TMEM131 (via PapD-L domain); the interaction is direct and is involved in assembly and TRAPPIII ER-to-Golgi transport complex-dependent secretion of collagen. Post-translationally, prolines at the third position of the tripeptide repeating unit (G-X-Y) are hydroxylated in some or all of the chains. In terms of tissue distribution, expressed in bones.

The protein localises to the secreted. Its subcellular location is the extracellular space. It localises to the extracellular matrix. Type I collagen is a member of group I collagen (fibrillar forming collagen). This chain is Collagen alpha-2(I) chain, found in Doedicurus sp. (South American giant glyptodont).